A 349-amino-acid polypeptide reads, in one-letter code: Phosphoribosylformylglycinamidine cyclo-ligase (349 aa).

The protein belongs to the AIR synthase family.

The protein localises to the cytoplasm. It catalyses the reaction 2-formamido-N(1)-(5-O-phospho-beta-D-ribosyl)acetamidine + ATP = 5-amino-1-(5-phospho-beta-D-ribosyl)imidazole + ADP + phosphate + H(+). The protein operates within purine metabolism; IMP biosynthesis via de novo pathway; 5-amino-1-(5-phospho-D-ribosyl)imidazole from N(2)-formyl-N(1)-(5-phospho-D-ribosyl)glycinamide: step 2/2. This chain is Phosphoribosylformylglycinamidine cyclo-ligase, found in Bordetella pertussis (strain Tohama I / ATCC BAA-589 / NCTC 13251).